The primary structure comprises 429 residues: DNA dC-&gt;dU-editing enzyme APOBEC3 (429 aa).

2 CMP/dCMP-type deaminase domains span residues 38–154 (DRKD…AQVA) and 238–357 (EEEF…LCSL). Zn(2+) is bound at residue His-71. Glu-73 (proton donor) is an active-site residue. The Zn(2+) site is built by Cys-105, Cys-108, His-288, Cys-316, and Cys-319.

This sequence belongs to the cytidine and deoxycytidylate deaminase family. As to quaternary structure, homodimer. Zn(2+) is required as a cofactor.

The protein resides in the cytoplasm. The catalysed reaction is a 2'-deoxycytidine in single-stranded DNA + H2O + H(+) = a 2'-deoxyuridine in single-stranded DNA + NH4(+). Its function is as follows. DNA deaminase (cytidine deaminase) which acts as an inhibitor of retrovirus replication and retrotransposon mobility via deaminase-dependent and -independent mechanisms. Selectively targets single-stranded DNA and does not deaminate double-stranded DNA or single- or double-stranded RNA. The sequence is that of DNA dC-&gt;dU-editing enzyme APOBEC3 (Apobec3) from Rattus norvegicus (Rat).